The sequence spans 371 residues: Protein OSB2, chloroplastic (371 aa).

The N-terminal 20 residues, 1–20 (MSLISKSLARIECSPFFYPR), are a transit peptide targeting the chloroplast. Positions 45–64 (GKTGNGERKQRAKAPAKTPE) are disordered. The region spanning 97 to 195 (VANWVNLIGF…VLVQNLNFIQ (99 aa)) is the SSB domain. 2 PDF region regions span residues 237-289 (WNHL…PKLE) and 312-360 (WKDL…PKLP).

In terms of tissue distribution, expressed in the floral abscission zone.

It is found in the plastid. Its subcellular location is the chloroplast. Functionally, binds preferentially single-stranded DNA. Does not bind to RNA. This Arabidopsis thaliana (Mouse-ear cress) protein is Protein OSB2, chloroplastic (OSB2).